The sequence spans 178 residues: Adenine phosphoribosyltransferase (178 aa).

This sequence belongs to the purine/pyrimidine phosphoribosyltransferase family. Homodimer.

The protein resides in the cytoplasm. The enzyme catalyses AMP + diphosphate = 5-phospho-alpha-D-ribose 1-diphosphate + adenine. It participates in purine metabolism; AMP biosynthesis via salvage pathway; AMP from adenine: step 1/1. Its function is as follows. Catalyzes a salvage reaction resulting in the formation of AMP, that is energically less costly than de novo synthesis. This Bacteroides fragilis (strain ATCC 25285 / DSM 2151 / CCUG 4856 / JCM 11019 / LMG 10263 / NCTC 9343 / Onslow / VPI 2553 / EN-2) protein is Adenine phosphoribosyltransferase.